The chain runs to 162 residues: uncharacterized protein (162 aa).

Belongs to the baculoviridae 19 kDa protein family.

This is an uncharacterized protein from Tortricidae (ClGV).